A 392-amino-acid chain; its full sequence is Phosphoglycerate kinase (392 aa).

Substrate is bound by residues aspartate 21 to asparagine 23, arginine 36, histidine 59 to arginine 62, arginine 118, and arginine 151. ATP is bound by residues lysine 201, glycine 292, glutamate 323, and glycine 349–serine 352.

Belongs to the phosphoglycerate kinase family. In terms of assembly, monomer.

It is found in the cytoplasm. The enzyme catalyses (2R)-3-phosphoglycerate + ATP = (2R)-3-phospho-glyceroyl phosphate + ADP. It functions in the pathway carbohydrate degradation; glycolysis; pyruvate from D-glyceraldehyde 3-phosphate: step 2/5. The sequence is that of Phosphoglycerate kinase from Borrelia turicatae (strain 91E135).